An 806-amino-acid polypeptide reads, in one-letter code: Enhancer of polycomb-like protein 1 (806 aa).

2 disordered regions span residues 403–461 (AITS…QEIG) and 751–806 (SLQQ…NAAA). Over residues 411–420 (KRAKSSKSSK) the composition is skewed to basic residues. The segment covering 421–439 (LHKEDSGLYADEKGSEPKK) has biased composition (basic and acidic residues). The segment covering 751-779 (SLQQQQMLQKGQQPINNAPHSQSSSPPSH) has biased composition (low complexity). Residues 785 to 795 (NPGSTPNQSSP) show a composition bias toward polar residues.

It belongs to the enhancer of polycomb family. Component of the NuA4 histone acetyltransferase complex.

It localises to the nucleus. In terms of biological role, component of the NuA4 histone acetyltransferase complex which is involved in transcriptional activation of selected genes principally by acetylation of nucleosomal histone H4 and H2A. The NuA4 complex is also involved in DNA repair. Involved in gene silencing by neighboring heterochromatin, blockage of the silencing spreading along the chromosome, and required for cell cycle progression through G2/M. This Kluyveromyces lactis (strain ATCC 8585 / CBS 2359 / DSM 70799 / NBRC 1267 / NRRL Y-1140 / WM37) (Yeast) protein is Enhancer of polycomb-like protein 1 (EPL1).